The following is a 214-amino-acid chain: Holliday junction branch migration complex subunit RuvA (214 aa).

Residues 1 to 64 (MITRIRGEML…EDAMTLYGFT (64 aa)) form a domain I region. The interval 65-143 (SGEQLAVFEL…DITSKDAYQD (79 aa)) is domain II. A flexible linker region spans residues 144 to 160 (ISASEKLDNTGEKLGIS). The domain III stretch occupies residues 161 to 214 (TRHKHLDELKAALSSLGYTNREIEKTVDAIQGQITEGQDMEELLRLALQKLNTK).

The protein belongs to the RuvA family. In terms of assembly, homotetramer. Forms an RuvA(8)-RuvB(12)-Holliday junction (HJ) complex. HJ DNA is sandwiched between 2 RuvA tetramers; dsDNA enters through RuvA and exits via RuvB. An RuvB hexamer assembles on each DNA strand where it exits the tetramer. Each RuvB hexamer is contacted by two RuvA subunits (via domain III) on 2 adjacent RuvB subunits; this complex drives branch migration. In the full resolvosome a probable DNA-RuvA(4)-RuvB(12)-RuvC(2) complex forms which resolves the HJ.

Its subcellular location is the cytoplasm. Its function is as follows. The RuvA-RuvB-RuvC complex processes Holliday junction (HJ) DNA during genetic recombination and DNA repair, while the RuvA-RuvB complex plays an important role in the rescue of blocked DNA replication forks via replication fork reversal (RFR). RuvA specifically binds to HJ cruciform DNA, conferring on it an open structure. The RuvB hexamer acts as an ATP-dependent pump, pulling dsDNA into and through the RuvAB complex. HJ branch migration allows RuvC to scan DNA until it finds its consensus sequence, where it cleaves and resolves the cruciform DNA. The chain is Holliday junction branch migration complex subunit RuvA from Natranaerobius thermophilus (strain ATCC BAA-1301 / DSM 18059 / JW/NM-WN-LF).